The sequence spans 1212 residues: MSSNLEDLLWQQILSMDPAELLSDNAISSTCDENIAAGHHFTQSPHVEMSVQSTTSAGHTGVMTTQSQFSNGVRDQNRESLSTLTGLSLESINNQINVQPTQMTFQPISPPMQGQNYVYSNNMINPIKPRSIIKSHGHSMGEMSFADHSLYVNAQPPVQQPQLKSLVGMHPCMTATSQGKYQTNKTVGPPSISASQITTGNAGIRPGEYQSVHNQSSVNGSKSYEITTASGDEWILTTPGGQSWTLKRNPPNPPNNRTNSVVNKAQQVSHAQPYVSGSSDGFYQGAALQSCAYVNTPGFTPVCETQNMNNSQATQLSASMNCINALQTTMDAIVTSTSKPVGAVSNNRGANFGMGGMENYMDNNSPWNQYCKVQDIVSQNCSQGKVVSSTPGIAPNLMKGNGLNVYGHVGCVDAAISDKQGGTANVASSLLNPEHQDWMRVTGTSTNLLNNINAETKMENYGFPENGNVHGAVNTALPLTLSSGQPYTSVPQHGACEGNGTIPVVQICSPNTAFKAHYSLLGTVDENNPLSVRESIQDTSFSNGCAPQLSSPGGNPTIIAHSMIGNNGTPNKDVCKPTPSLRAIKKLNFDYDDRGENIGFPSKLAALLSMGENMSKMDNPCYGTSLAQFEESHQQNASEGKISIADLEFSEEDDVLSSAASVSCNDNCVMKIGASQQGTTVADLQQGFKQQMNGEFSMFAVDGNIKTQEMSNDCASNVTDNACAIRQNKRMHCEIGISEDGRVREEEKCSDVAIHVPRKSARIHNMKSEGVTCGMCVTAADSTRQDASGGSSSGTKKGEKLQGLWKGYQDDDDSELTELSDTDSDNDVQNCHGVRKTGSKTYSSVFFNPDYRQAKRLLADIPYRRWIPDTFNMEEHEGPFLPIVTRPPTVFMGGRRRRTYLRRSVTSIGPLSKLTYFKELLQSYVLRNSNCYLSIGWPAKHRVYIMSEEKLGYNHIPTLREMFPLPPGWMIVLGIVGSETPAALYKHMVVLLCENKWVLLHNYRDSKHELYFAASDLKQFMEEGLSRCDCIYYEKSVPYGVAMEDSVREFLRNSKTFQSLMEYRKNMHGSTWTFNGMPGRLGDRVIHICNPELVNSIPADEAIRYEGKPLYFFAFVTTFKSHPGSKANVLIAADKNLGIYGYHKGRPRIRYLCKNVQAFFRAGVRKMYLDYEIPSKTLLAVSEDDYLCILQKAPCLLLKPAVFRKTFSQEGK.

The disordered stretch occupies residues 783 to 802; sequence TRQDASGGSSSGTKKGEKLQ.

This is an uncharacterized protein from Human herpesvirus 6B (strain Z29) (HHV-6 variant B).